The sequence spans 450 residues: Ribosomal protein uS12 methylthiotransferase RimO (450 aa).

One can recognise an MTTase N-terminal domain in the interval 7–123 (QKVSMVSLGC…IAEILAEKSG (117 aa)). The [4Fe-4S] cluster site is built by Cys-16, Cys-52, Cys-86, Cys-161, Cys-165, and Cys-168. The Radical SAM core domain maps to 147–377 (SSPAWFSYLK…MRIQARLSFK (231 aa)). The 69-residue stretch at 380-448 (RELIGTTEQV…DYDLIGEIQE (69 aa)) folds into the TRAM domain.

The protein belongs to the methylthiotransferase family. RimO subfamily. [4Fe-4S] cluster serves as cofactor.

Its subcellular location is the cytoplasm. The enzyme catalyses L-aspartate(89)-[ribosomal protein uS12]-hydrogen + (sulfur carrier)-SH + AH2 + 2 S-adenosyl-L-methionine = 3-methylsulfanyl-L-aspartate(89)-[ribosomal protein uS12]-hydrogen + (sulfur carrier)-H + 5'-deoxyadenosine + L-methionine + A + S-adenosyl-L-homocysteine + 2 H(+). In terms of biological role, catalyzes the methylthiolation of an aspartic acid residue of ribosomal protein uS12. The sequence is that of Ribosomal protein uS12 methylthiotransferase RimO from Pelobacter propionicus (strain DSM 2379 / NBRC 103807 / OttBd1).